A 57-amino-acid polypeptide reads, in one-letter code: uncharacterized protein (57 aa).

The helical transmembrane segment at 34-54 threads the bilayer; it reads AALLDAAALVVIPGLLTAAAV.

The protein resides in the membrane. This is an uncharacterized protein from Dictyostelium discoideum (Social amoeba).